A 1060-amino-acid chain; its full sequence is Positive regulator of purine utilization (1060 aa).

The segment covering 1-15 has biased composition (polar residues); it reads MLNPSTSDIHTSPTA. A disordered region spans residues 1 to 48; that stretch reads MLNPSTSDIHTSPTAVGNGRKRPHPIADSGSAMPSDPSAQQLPHPANE. A DNA-binding region (zn(2)-C6 fungal-type) is located at residues 67 to 94; sequence CNRCRQRKNRCDQRLPRCQACEKAGVRC. Disordered stretches follow at residues 163–207, 251–282, 367–391, 811–862, and 877–969; these read EIAA…DAED, SVPGNSSERGPSRPKERLPHSATGTEGSTTRD, AEDQKEGRDHSPSATKRQRLSSRQY, VQTS…RFDM, and RQGS…PSGM. Basic and acidic residues-rich tracts occupy residues 170–182, 189–207, and 260–269; these read SNDKSVRIKKEKN, KASRYDHDPEVKQDSDAED, and GPSRPKERLP. Residues 272-282 show a composition bias toward polar residues; it reads ATGTEGSTTRD. Basic and acidic residues predominate over residues 367–377; that stretch reads AEDQKEGRDHS. The span at 811-831 shows a compositional bias: polar residues; that stretch reads VQTSTSGSRQFNATQSRSRPY. 2 stretches are compositionally biased toward low complexity: residues 832-859 and 930-952; these read SRQQAEQRQRQSASRRQLQMRQSRPLPR and PRYYYNNSPQQSGSPGSVVAASG.

The protein resides in the nucleus. In terms of biological role, mediates the induction of a number of unlinked genes involved in purine utilization. Binds to the consensus sequence 5'-TCGGNNNNNNCCGA-3'. This is Positive regulator of purine utilization (uaY) from Emericella nidulans (strain FGSC A4 / ATCC 38163 / CBS 112.46 / NRRL 194 / M139) (Aspergillus nidulans).